We begin with the raw amino-acid sequence, 606 residues long: NADH-ubiquinone oxidoreductase chain 5 (606 aa).

The next 16 helical transmembrane spans lie at 4 to 24 (FSSL…SSIL), 38 to 58 (NIIS…IHSG), 87 to 107 (MIFV…SLWY), 117 to 137 (FFKY…ANNL), 140 to 160 (LFIG…WWYG), 171 to 191 (AILY…WFLF), 211 to 233 (LPLL…HPWL), 241 to 261 (TPVS…FLLI), 273 to 293 (IQSL…ICAL), 301 to 320 (IIAF…IGIN), 325 to 347 (AFLH…GSII), 366 to 386 (MPFT…MPFL), 413 to 433 (LIAT…ALLG), 457 to 477 (LLIG…PTTI), 488 to 508 (LTAL…SLIT), and 584 to 604 (IKLY…LFNL).

This sequence belongs to the complex I subunit 5 family. In terms of assembly, core subunit of respiratory chain NADH dehydrogenase (Complex I) which is composed of 45 different subunits.

Its subcellular location is the mitochondrion inner membrane. It catalyses the reaction a ubiquinone + NADH + 5 H(+)(in) = a ubiquinol + NAD(+) + 4 H(+)(out). Core subunit of the mitochondrial membrane respiratory chain NADH dehydrogenase (Complex I) which catalyzes electron transfer from NADH through the respiratory chain, using ubiquinone as an electron acceptor. Essential for the catalytic activity and assembly of complex I. In Equus asinus (Donkey), this protein is NADH-ubiquinone oxidoreductase chain 5 (MT-ND5).